Here is a 121-residue protein sequence, read N- to C-terminus: Small ribosomal subunit protein uS13 (121 aa).

Residues 97-121 form a disordered region; it reads VRGQRTRTNARTRRGARKTVAGKKK. Residues 100–121 show a composition bias toward basic residues; it reads QRTRTNARTRRGARKTVAGKKK.

It belongs to the universal ribosomal protein uS13 family. As to quaternary structure, part of the 30S ribosomal subunit. Forms a loose heterodimer with protein S19. Forms two bridges to the 50S subunit in the 70S ribosome.

Functionally, located at the top of the head of the 30S subunit, it contacts several helices of the 16S rRNA. In the 70S ribosome it contacts the 23S rRNA (bridge B1a) and protein L5 of the 50S subunit (bridge B1b), connecting the 2 subunits; these bridges are implicated in subunit movement. Contacts the tRNAs in the A and P-sites. In Prochlorococcus marinus (strain MIT 9313), this protein is Small ribosomal subunit protein uS13.